A 160-amino-acid chain; its full sequence is Ribosome maturation factor RimP (160 aa).

This sequence belongs to the RimP family.

It is found in the cytoplasm. Functionally, required for maturation of 30S ribosomal subunits. This is Ribosome maturation factor RimP from Cronobacter sakazakii (strain ATCC BAA-894) (Enterobacter sakazakii).